The following is a 198-amino-acid chain: Single-stranded DNA cytosine deaminase (198 aa).

A Bipartite nuclear localization signal motif is present at residues 1–30 (MDSLLMKQKKFLYHFKNVRWAKGRHETYLC). The segment at 2-26 (DSLLMKQKKFLYHFKNVRWAKGRHE) is interaction with SUPT6H. One can recognise a CMP/dCMP-type deaminase domain in the interval 23–129 (GRHETYLCYV…KAEPEGLRRL (107 aa)). Phosphothreonine; by PKA is present on T27. The residue at position 38 (S38) is a Phosphoserine; by PKA. Positions 39–42 (ATSC) are important for interaction with CTNNBL1. Residue H56 coordinates Zn(2+). E58 acts as the Proton donor in catalysis. Zn(2+) contacts are provided by C87 and C90. A required for interaction with RNF126 region spans residues 88 to 116 (YDCARHVAEFLRWNPNLSLRIFTARLYFC). Residues 183-198 (LYEVDDLRDAFRMLGF) carry the Nuclear export signal motif.

The protein belongs to the cytidine and deoxycytidylate deaminase family. Interacts with CTNNBL1; the interaction is important for the immunoglobulin switch activity of AICDA. Interacts (via its NLS) with KPNA1. Interacts with PKA/PRKACA and PRKAR1A/PKR1. Interacts with SUPT6H, TRIM28 and NCL. Directly interacts with MCM3AP/GANP; this interaction may favor AICDA recruitment to immunoglobulin variable region genes, hence promoting somatic hypermutations. Requires Zn(2+) as cofactor. In terms of processing, ser-38 is the major site whereas Thr-27 is the minor site of phosphorylation. Phosphorylation regulates its class-switch recombination activity. Probably monoubiquitinated on several residues by RNF126. In terms of tissue distribution, expressed in germinal center B-cells (at protein level).

Its subcellular location is the nucleus. The protein localises to the cytoplasm. It catalyses the reaction a 2'-deoxycytidine in single-stranded DNA + H2O + H(+) = a 2'-deoxyuridine in single-stranded DNA + NH4(+). Its function is as follows. Single-stranded DNA-specific cytidine deaminase. Involved in somatic hypermutation (SHM), gene conversion, and class-switch recombination (CSR) in B-lymphocytes by deaminating C to U during transcription of Ig-variable (V) and Ig-switch (S) region DNA. Required for several crucial steps of B-cell terminal differentiation necessary for efficient antibody responses. May also play a role in the epigenetic regulation of gene expression by participating in DNA demethylation. This Mus musculus (Mouse) protein is Single-stranded DNA cytosine deaminase (Aicda).